The primary structure comprises 123 residues: Defensin beta 118 (123 aa).

The signal sequence occupies residues 1-19 (MKLLLLALPILVLLPQVIP). 3 disulfide bridges follow: Cys27/Cys54, Cys34/Cys48, and Cys38/Cys55. Positions 65-123 (LPTTSPTPLSDSTPGIIDNILTIRFTTDYFEISSKKDMVEESEAGQGTQTSPPNVHHTS) are excised as a propeptide. Positions 100 to 123 (KDMVEESEAGQGTQTSPPNVHHTS) are disordered. Positions 109-123 (GQGTQTSPPNVHHTS) are enriched in polar residues.

Belongs to the beta-defensin family. Post-translationally, the three-dimensional structure formed by the three intramolecular disulfide bridges is indispensable for antimicrobial activity. High-level and epididymis-specific expression. Most abundant in the epithelium of the caput and is also present in the lumen and bound to sperm.

It localises to the secreted. Its function is as follows. Host defense peptide that exhibits antimicrobial activity against both Gram-negative bacteria, such as E.coli and S.typhimurium, and Gram-positive bacteria, such as S.aureus and B.subtilis. Inhibits cell adhesion of E.coli on intestinal epithelial enterocytes. Causes rapid permeabilization of both the outer and inner membrane of E.coli, leading to morphological alterations on the bacterial surface. Binds to bacterial lipopolysaccharides (LPS) with high affinity, and may thereby be involved in immunoregulation through LPS neutralization. May contribute to epididymal innate immunity and protect the sperm against attack by microorganisms. This is Defensin beta 118 (DEFB118) from Macaca mulatta (Rhesus macaque).